An 885-amino-acid polypeptide reads, in one-letter code: Aconitate hydratase A (885 aa).

3 residues coordinate [4Fe-4S] cluster: cysteine 425, cysteine 491, and cysteine 494.

Belongs to the aconitase/IPM isomerase family. As to quaternary structure, monomer. The cofactor is [4Fe-4S] cluster.

The catalysed reaction is citrate = D-threo-isocitrate. The enzyme catalyses (2S,3R)-3-hydroxybutane-1,2,3-tricarboxylate = 2-methyl-cis-aconitate + H2O. It participates in carbohydrate metabolism; tricarboxylic acid cycle; isocitrate from oxaloacetate: step 2/2. It functions in the pathway organic acid metabolism; propanoate degradation. Involved in the catabolism of short chain fatty acids (SCFA) via the tricarboxylic acid (TCA)(acetyl degradation route) and probably the 2-methylcitrate cycle I (propionate degradation route). Catalyzes the reversible isomerization of citrate to isocitrate via cis-aconitate. Could catalyze the hydration of 2-methyl-cis-aconitate to yield (2R,3S)-2-methylisocitrate. The apo form of AcnA functions as a RNA-binding regulatory protein. The sequence is that of Aconitate hydratase A (acnA) from Rickettsia bellii (strain RML369-C).